We begin with the raw amino-acid sequence, 209 residues long: GTP-binding nuclear protein Ran1A (209 aa).

One can recognise a Small GTPase Ran-type domain in the interval 1-162; that stretch reads NFKLVIVGDG…LYLARKLAGD (162 aa). 9 to 16 is a GTP binding site; that stretch reads DGGTGKTT. Positions 28 to 36 are switch-I; that stretch reads KKYEPTIGV. Residues G59, 113 to 116, and 141 to 143 contribute to the GTP site; these read NKVD and SAK. Positions 59 to 75 are switch-II; the sequence is GQEKFGGLRDGYYIHGQ. Low complexity predominate over residues 187 to 196; sequence QHEAELAQAA. A disordered region spans residues 187-209; the sequence is QHEAELAQAASQPLPDDDDDAFD.

This sequence belongs to the small GTPase superfamily. Ran family. In terms of assembly, found in a nuclear export complex with RanGTP, exportin and pre-miRNA.

It localises to the nucleus. Functionally, GTP-binding protein involved in nucleocytoplasmic transport. Required for the import of protein into the nucleus and also for RNA export. Involved in chromatin condensation and control of cell cycle. The chain is GTP-binding nuclear protein Ran1A (RAN1A) from Lotus japonicus (Lotus corniculatus var. japonicus).